The primary structure comprises 438 residues: Glutamyl-tRNA(Gln) amidotransferase subunit D (438 aa).

Positions 91–421 constitute an Asparaginase/glutaminase domain; it reads KNLSILSTGG…SEIYEIMKTN (331 aa). Residues T101, T177, D178, and K254 contribute to the active site.

The protein belongs to the asparaginase 1 family. GatD subfamily. In terms of assembly, heterodimer of GatD and GatE.

The enzyme catalyses L-glutamyl-tRNA(Gln) + L-glutamine + ATP + H2O = L-glutaminyl-tRNA(Gln) + L-glutamate + ADP + phosphate + H(+). Functionally, allows the formation of correctly charged Gln-tRNA(Gln) through the transamidation of misacylated Glu-tRNA(Gln) in organisms which lack glutaminyl-tRNA synthetase. The reaction takes place in the presence of glutamine and ATP through an activated gamma-phospho-Glu-tRNA(Gln). The GatDE system is specific for glutamate and does not act on aspartate. In Methanosphaera stadtmanae (strain ATCC 43021 / DSM 3091 / JCM 11832 / MCB-3), this protein is Glutamyl-tRNA(Gln) amidotransferase subunit D.